Reading from the N-terminus, the 1336-residue chain is Lysine-specific demethylase 2B (1336 aa).

The interval 1 to 25 is disordered; that stretch reads MAGPQMGGSAEDHPPRKRHAAEKQK. The span at 15-25 shows a compositional bias: basic residues; sequence PRKRHAAEKQK. Ser57 is modified (phosphoserine). Residues 178–346 form the JmjC domain; sequence FSHTKLEHLV…MQLRIYEIED (169 aa). Thr239 is a binding site for substrate. Fe cation contacts are provided by His242 and Asp244. Residue Lys259 participates in substrate binding. Fe cation is bound at residue His314. Over residues 410–430 the composition is skewed to acidic residues; it reads MEEEACDQQPQEEEEKDEEGE. Residues 410 to 465 form a disordered region; that stretch reads MEEEACDQQPQEEEEKDEEGEGRDRAPKPPTDGSTSPTSTPSEDQEALGKKPKAPA. Over residues 440–451 the composition is skewed to low complexity; sequence TDGSTSPTSTPS. Phosphoserine is present on residues Ser474 and Ser477. Thr493 carries the phosphothreonine modification. At Ser497 the chain carries Phosphoserine. The CXXC-type zinc finger occupies 606 to 652; that stretch reads ARRRRTRCRKCEACLRTECGECHFCKDMKKFGGPGRMKQSCIMRQCI. Residues Cys613, Cys616, Cys619, Cys624, Cys627, Cys630, Cys646, Cys651, Cys662, Cys665, Cys688, Cys691, His696, Cys699, Cys719, and Cys722 each coordinate Zn(2+). The PHD-type zinc-finger motif lies at 659-725; that stretch reads TAVCLVCGEA…CWECPKCNHA (67 aa). Disordered stretches follow at residues 727–843 and 855–1034; these read KTGK…SLSP and QLKP…SPPK. Over residues 749-799 the composition is skewed to basic and acidic residues; it reads KEQKMNRDNKEGQEPAKRRSECEEAPRRRSDEHSKKVPPDGLLRRKSDDVH. The span at 819 to 843 shows a compositional bias: low complexity; it reads SSLQTSPGSSSHLSPRPPLGSSLSP. Glycyl lysine isopeptide (Lys-Gly) (interchain with G-Cter in SUMO2) cross-links involve residues Lys857 and Lys890. A compositionally biased stretch (basic and acidic residues) spans 902 to 911; the sequence is PKTRESDHSR. Residues 932–941 show a composition bias toward basic residues; the sequence is KVKMRRKRRL. The span at 942 to 960 shows a compositional bias: basic and acidic residues; sequence PNKELSRELSKELNHEIQR. Residues 943–971 adopt a coiled-coil conformation; the sequence is NKELSRELSKELNHEIQRTENSLANENQQ. Ser951 carries the phosphoserine modification. Polar residues predominate over residues 961–971; it reads TENSLANENQQ. Phosphoserine occurs at positions 975, 979, 1018, and 1031. The segment covering 1014 to 1024 has biased composition (low complexity); it reads PSLRSPPRVIS. An F-box domain is found at 1059–1105; sequence DGAAHVMHREVWMAVFSYLSHQDLCVCMRVCRTWNRWCCDKRLWTRI. LRR repeat units follow at residues 1093–1120, 1133–1154, 1156–1182, 1222–1247, 1248–1277, 1278–1302, and 1303–1336; these read NRWC…MLSG, WTNI…LRDL, LSGC…DVQW, GLDI…HLSY, CNHV…NLSD, CNKV…DLRY, and CKQV…QKLS.

The protein belongs to the JHDM1 histone demethylase family. In terms of assembly, interacts with SKP1, forming heterodimers. The heterodimeric KDM2B-SKP1 complex interacts with the PCGF1-BCORL1 heterodimeric complex to form a homotetrameric polycomb repression complex 1 (PRC1.1). Directly interacts with CUL1. The SKP1-KDM2B complex interacts with UBB. It depends on Fe(2+) as a cofactor.

It is found in the nucleus. It localises to the nucleolus. Its subcellular location is the chromosome. The catalysed reaction is N(6),N(6)-dimethyl-L-lysyl(36)-[histone H3] + 2 2-oxoglutarate + 2 O2 = L-lysyl(36)-[histone H3] + 2 formaldehyde + 2 succinate + 2 CO2. Histone demethylase activity is inhibited by fumarate. In terms of biological role, histone demethylase that demethylates 'Lys-4' and 'Lys-36' of histone H3, thereby playing a central role in histone code. Preferentially demethylates trimethylated H3 'Lys-4' and dimethylated H3 'Lys-36' residue while it has weak or no activity for mono- and tri-methylated H3 'Lys-36'. Preferentially binds the transcribed region of ribosomal RNA and represses the transcription of ribosomal RNA genes which inhibits cell growth and proliferation. May also serve as a substrate-recognition component of the SCF (SKP1-CUL1-F-box protein)-type E3 ubiquitin ligase complex. The polypeptide is Lysine-specific demethylase 2B (KDM2B) (Homo sapiens (Human)).